The sequence spans 418 residues: Secreted aspartic protease 5 (418 aa).

Residues 1–18 (MFLKNILSVLAFALLIDA) form the signal peptide. The propeptide at 19–76 (APVKRSPGFVTLDFNVKRSLVDPDDPTVEAKRSPLFLEFTPSEFPVDETGRDGDVDKR) is activation peptide. The 315-residue stretch at 90 to 404 (YTADITVGSD…NLDDKKISMA (315 aa)) folds into the Peptidase A1 domain. Aspartate 108 is an active-site residue. Residue 108 to 110 (DTG) participates in pepstatin A binding. An intrachain disulfide couples cysteine 123 to cysteine 135. A pepstatin A-binding site is contributed by 161–162 (GD). Zn(2+) is bound at residue glutamate 268. The active site involves aspartate 294. 294–298 (DSGTT) provides a ligand contact to pepstatin A. Cysteine 332 and cysteine 370 are disulfide-bonded.

Belongs to the peptidase A1 family.

Its subcellular location is the secreted. It catalyses the reaction Preferential cleavage at the carboxyl of hydrophobic amino acids, but fails to cleave 15-Leu-|-Tyr-16, 16-Tyr-|-Leu-17 and 24-Phe-|-Phe-25 of insulin B chain. Activates trypsinogen, and degrades keratin.. With respect to regulation, inhibited by pepstatin A analogs. Its function is as follows. Secreted aspartic peptidases (SAPs) are a group of ten acidic hydrolases considered as key virulence factors. These enzymes supply the fungus with nutrient amino acids as well as are able to degrade the selected host's proteins involved in the immune defense. Moreover, acts toward human hemoglobin though limited proteolysis to generate a variety of antimicrobial hemocidins, enabling to compete with the other microorganisms of the same physiological niche using the microbicidal peptides generated from the host protein. The sequence is that of Secreted aspartic protease 5 from Candida albicans (strain SC5314 / ATCC MYA-2876) (Yeast).